Consider the following 490-residue polypeptide: Hippocampus abundant transcript 1 protein (490 aa).

Met-1 bears the N-acetylmethionine mark. The Extracellular segment spans residues 1-40 (MTQGKKKKRAANRSIMLAKKIIIKDGGTPQGIGSPSVYHA). Asn-12 is a glycosylation site (N-linked (GlcNAc...) asparagine). Residues 41–61 (VIVIFLEFFAWGLLTAPTLVV) traverse the membrane as a helical segment. Over 62 to 74 (LHETFPKHTFLMN) the chain is Cytoplasmic. A helical membrane pass occupies residues 75 to 95 (GLIQGVKGLLSFLSAPLIGAL). Over 96–103 (SDVWGRKS) the chain is Extracellular. A helical transmembrane segment spans residues 104–124 (FLLLTVFFTCAPIPLMKISPW). The Cytoplasmic segment spans residues 125-126 (WY). Residues 127-147 (FAVISVSGVFAVTFSVVFAYV) form a helical membrane-spanning segment. Topologically, residues 148–160 (ADITQEHERSMAY) are extracellular. Residues 161–181 (GLVSATFAASLVTSPAIGAYL) traverse the membrane as a helical segment. Residues 182-188 (GRVYGDS) lie on the Cytoplasmic side of the membrane. A helical membrane pass occupies residues 189–209 (LVVVLATAIALLDICFILVAV). Over 210 to 243 (PESLPEKMRPASWGAPISWEQADPFASLKKVGQD) the chain is Extracellular. The helical transmembrane segment at 244–264 (SIVLLICITVFLSYLPEAGQY) threads the bilayer. Over 265 to 284 (SSFFLYLRQIMKFSPESVAA) the chain is Cytoplasmic. A helical membrane pass occupies residues 285 to 305 (FIAVLGILSIIAQTIVLSLLM). At 306–313 (RSIGNKNT) the chain is on the extracellular side. The helical transmembrane segment at 314-334 (ILLGLGFQILQLAWYGFGSEP) threads the bilayer. Residues 335 to 337 (WMM) lie on the Cytoplasmic side of the membrane. Residues 338 to 358 (WAAGAVAAMSSITFPAVSALV) form a helical membrane-spanning segment. The Extracellular segment spans residues 359–379 (SRTADADQQGVVQGMITGIRG). A helical membrane pass occupies residues 380–400 (LCNGLGPALYGFIFYIFHVEL). Residues 401–427 (KELPITGTDLGTNTSPQHHFEQNSIIP) are Cytoplasmic-facing. The chain crosses the membrane as a helical span at residues 428–448 (GPPFLFGACSVLLALLVALFI). Over 449 to 490 (PEHTNLSLRSSSWRKHCGSHSHPHNTQAPGEAKEPLLQDTNV) the chain is Extracellular. Asn-453 is a glycosylation site (N-linked (GlcNAc...) asparagine). Residues 465–490 (CGSHSHPHNTQAPGEAKEPLLQDTNV) are disordered.

Belongs to the major facilitator superfamily.

It is found in the membrane. This Homo sapiens (Human) protein is Hippocampus abundant transcript 1 protein.